The chain runs to 155 residues: Ribosomal RNA large subunit methyltransferase H (155 aa).

S-adenosyl-L-methionine-binding positions include Leu-73, Gly-104, and 123 to 128 (LSALTL).

It belongs to the RNA methyltransferase RlmH family. In terms of assembly, homodimer.

The protein localises to the cytoplasm. It carries out the reaction pseudouridine(1915) in 23S rRNA + S-adenosyl-L-methionine = N(3)-methylpseudouridine(1915) in 23S rRNA + S-adenosyl-L-homocysteine + H(+). Specifically methylates the pseudouridine at position 1915 (m3Psi1915) in 23S rRNA. In Coxiella burnetii (strain Dugway 5J108-111), this protein is Ribosomal RNA large subunit methyltransferase H.